Reading from the N-terminus, the 510-residue chain is MEYVIEMLNIRKAFPGIVANDNINLQVKKGEIHALLGENGAGKSTLMNVLFGLYQPERGEIRVRGEKVHINSPNKANDLGIGMVHQHFMLVDTFTVAENIILGKEPKKFGRIDRKRAGQEVQDISDRYGLQIHPEAKAADISVGMQQRAEILKTLYRGADILIFDEPTAVLTPHEIKELMQIMKNLVKEGKSIILITHKLKEIMEICDRVTVIRKGKGIKTLDVRDTNQDELASLMVGREVSFKTEKRAAQPGAEVLAIDGITVKDTRGIETVRDLSLSVKAGEIVGIAGVDGNGQSELIEAVTGLRKTDSGTITLNGKQIQNLTPRKITESGIGHIPQDRHKHGLVLDFPIGENILLQSYYKKPYSALGVLHKGEMYKKARSLITEYDVRTPDEYTHARALSGGNQQKAIIGREIDRNPDLLIAAQPTRGLDVGAIEFVHKKLIEQRDAGKAVLLLSFELEEIMNLSDRIAVIFEGRIIASVNPQETTEQELGLLMAGSTQKEAGKANG.

2 consecutive ABC transporter domains span residues 5–240 (IEML…VGRE) and 257–501 (LAID…AGST). An ATP-binding site is contributed by 37-44 (GENGAGKS).

It belongs to the ABC transporter superfamily. In terms of assembly, the complex is composed of two ATP-binding proteins (NupO), two transmembrane proteins (NupP and NupQ) and a solute-binding protein (NupN).

Its subcellular location is the cell membrane. Part of an ABC transporter complex involved in the uptake of guanosine. Responsible for energy coupling to the transport system. May be a nucleoside transporter of broad specificity but with various affinities for different substrates. This chain is Guanosine import ATP-binding protein NupO, found in Bacillus subtilis (strain 168).